The following is a 73-amino-acid chain: MIKFSRRRLAKLANAQIDDRIDYKNVDLLRQFLTEEGKILPRRVTGLTAKQQRGMTRAIKQARIMALLEFIHR.

It belongs to the bacterial ribosomal protein bS18 family. In terms of assembly, part of the 30S ribosomal subunit.

It is found in the plastid. It localises to the chloroplast. This is Small ribosomal subunit protein bS18c from Nephroselmis olivacea (Green alga).